We begin with the raw amino-acid sequence, 211 residues long: ATP phosphoribosyltransferase (211 aa).

This sequence belongs to the ATP phosphoribosyltransferase family. Short subfamily. In terms of assembly, heteromultimer composed of HisG and HisZ subunits.

It localises to the cytoplasm. It carries out the reaction 1-(5-phospho-beta-D-ribosyl)-ATP + diphosphate = 5-phospho-alpha-D-ribose 1-diphosphate + ATP. Its pathway is amino-acid biosynthesis; L-histidine biosynthesis; L-histidine from 5-phospho-alpha-D-ribose 1-diphosphate: step 1/9. Catalyzes the condensation of ATP and 5-phosphoribose 1-diphosphate to form N'-(5'-phosphoribosyl)-ATP (PR-ATP). Has a crucial role in the pathway because the rate of histidine biosynthesis seems to be controlled primarily by regulation of HisG enzymatic activity. The protein is ATP phosphoribosyltransferase of Pseudomonas aeruginosa (strain UCBPP-PA14).